Here is a 361-residue protein sequence, read N- to C-terminus: RNA 3'-terminal phosphate cyclase (361 aa).

ATP contacts are provided by residues Q109 and 293–297; that span reads HLADQ. H319 (tele-AMP-histidine intermediate) is an active-site residue.

This sequence belongs to the RNA 3'-terminal cyclase family. Type 1 subfamily.

Its subcellular location is the cytoplasm. The catalysed reaction is a 3'-end 3'-phospho-ribonucleotide-RNA + ATP = a 3'-end 2',3'-cyclophospho-ribonucleotide-RNA + AMP + diphosphate. Functionally, catalyzes the conversion of 3'-phosphate to a 2',3'-cyclic phosphodiester at the end of RNA. The mechanism of action of the enzyme occurs in 3 steps: (A) adenylation of the enzyme by ATP; (B) transfer of adenylate to an RNA-N3'P to produce RNA-N3'PP5'A; (C) and attack of the adjacent 2'-hydroxyl on the 3'-phosphorus in the diester linkage to produce the cyclic end product. The biological role of this enzyme is unknown but it is likely to function in some aspects of cellular RNA processing. The sequence is that of RNA 3'-terminal phosphate cyclase from Methylococcus capsulatus (strain ATCC 33009 / NCIMB 11132 / Bath).